A 294-amino-acid polypeptide reads, in one-letter code: ATP synthase gamma chain (294 aa).

The protein belongs to the ATPase gamma chain family. F-type ATPases have 2 components, CF(1) - the catalytic core - and CF(0) - the membrane proton channel. CF(1) has five subunits: alpha(3), beta(3), gamma(1), delta(1), epsilon(1). CF(0) has three main subunits: a, b and c.

It is found in the cell inner membrane. Functionally, produces ATP from ADP in the presence of a proton gradient across the membrane. The gamma chain is believed to be important in regulating ATPase activity and the flow of protons through the CF(0) complex. The sequence is that of ATP synthase gamma chain from Paramagnetospirillum magneticum (strain ATCC 700264 / AMB-1) (Magnetospirillum magneticum).